The following is a 97-amino-acid chain: Putative pterin-4-alpha-carbinolamine dehydratase (97 aa).

It belongs to the pterin-4-alpha-carbinolamine dehydratase family.

It carries out the reaction (4aS,6R)-4a-hydroxy-L-erythro-5,6,7,8-tetrahydrobiopterin = (6R)-L-erythro-6,7-dihydrobiopterin + H2O. This Ruegeria pomeroyi (strain ATCC 700808 / DSM 15171 / DSS-3) (Silicibacter pomeroyi) protein is Putative pterin-4-alpha-carbinolamine dehydratase.